The sequence spans 388 residues: Chorismate synthase (388 aa).

Residues arginine 39 and arginine 45 each contribute to the NADP(+) site. Residues 132–134 (RSS), 251–252 (NA), glycine 296, 311–315 (KPIPT), and arginine 337 each bind FMN.

It belongs to the chorismate synthase family. As to quaternary structure, homotetramer. The cofactor is FMNH2.

It catalyses the reaction 5-O-(1-carboxyvinyl)-3-phosphoshikimate = chorismate + phosphate. The protein operates within metabolic intermediate biosynthesis; chorismate biosynthesis; chorismate from D-erythrose 4-phosphate and phosphoenolpyruvate: step 7/7. Functionally, catalyzes the anti-1,4-elimination of the C-3 phosphate and the C-6 proR hydrogen from 5-enolpyruvylshikimate-3-phosphate (EPSP) to yield chorismate, which is the branch point compound that serves as the starting substrate for the three terminal pathways of aromatic amino acid biosynthesis. This reaction introduces a second double bond into the aromatic ring system. The chain is Chorismate synthase from Staphylococcus carnosus (strain TM300).